Consider the following 242-residue polypeptide: Uridylate kinase (242 aa).

ATP is bound at residue 11–14 (KLSG). Residues 19 to 24 (GDKGVG) are involved in allosteric activation by GTP. Position 53 (glycine 53) interacts with UMP. Positions 54 and 58 each coordinate ATP. UMP-binding positions include aspartate 73 and 134 to 141 (IGSPYFST). ATP is bound by residues asparagine 162, tyrosine 168, and aspartate 171.

The protein belongs to the UMP kinase family. Homohexamer.

Its subcellular location is the cytoplasm. The catalysed reaction is UMP + ATP = UDP + ADP. The protein operates within pyrimidine metabolism; CTP biosynthesis via de novo pathway; UDP from UMP (UMPK route): step 1/1. Its activity is regulated as follows. Allosterically activated by GTP. Inhibited by UTP. Catalyzes the reversible phosphorylation of UMP to UDP. This chain is Uridylate kinase, found in Streptococcus agalactiae serotype III (strain NEM316).